The sequence spans 210 residues: Protein SgcE (210 aa).

Residue Ser-6 coordinates substrate. A divalent metal cation contacts are provided by His-31, Asp-33, and His-64. The active-site Proton acceptor is Asp-33. Residues His-64, 140 to 143 (DGQG), 169 to 171 (DGG), and 191 to 192 (GR) contribute to the substrate site. Asp-169 contributes to the a divalent metal cation binding site. Catalysis depends on Asp-169, which acts as the Proton donor.

Belongs to the ribulose-phosphate 3-epimerase family. Co(2+) is required as a cofactor. Requires Fe(2+) as cofactor. The cofactor is Mn(2+). Zn(2+) serves as cofactor.

The protein operates within carbohydrate degradation. In terms of biological role, probable pentose-5-phosphate 3-epimerase. This Escherichia coli (strain K12) protein is Protein SgcE (sgcE).